The sequence spans 475 residues: MSPQTETKAGVGFKAGVKDYRLTYYTPEYKTKDTDILAAFRMTPQPGVPAEEAGAAVAAESSTGTWTTVWTDGLTSLDRYKGRCYDIEPVAGEENQYIAYVAYPLDLFEEGSVTNMLTSIVGNVFGFKALRALRLEDLRIPPAYSKTFLGPPHGIQVERDKLNKYGRPLLGCTIKPKLGLSAKNYGRAVYECLRGGLDFTKDDENVNSQPFMRWRDRFLFVAEALFKSQAETGEIKGHYLNATAGTCEEMMKRAVFARELGAPIVMHDYLTGGFTANTSLAFYCRDNGLLLHIHRAMHAVIDRQKNHGIHFRVLAKALRMSGGDHIHAGTVVGKLEGEREVTLGFVDLLRDDYIEKDRSRGIYFTQDWVSMPGVFPVASGGIHVWHMPALTEIFGDDSVLQFGGGTLGHPWGNAPGAVANRVALEACVQARNEGRDLAREGNEIIREASKWSPELAAACEIWKAIKFEFETIDTL.

Positions 1-2 are excised as a propeptide; it reads MS. Proline 3 carries the N-acetylproline modification. Lysine 14 is modified (N6,N6,N6-trimethyllysine). Positions 123 and 173 each coordinate substrate. Lysine 175 functions as the Proton acceptor in the catalytic mechanism. Substrate is bound at residue lysine 177. Residues lysine 201, aspartate 203, and glutamate 204 each contribute to the Mg(2+) site. At lysine 201 the chain carries N6-carboxylysine. Histidine 294 (proton acceptor) is an active-site residue. Residues arginine 295, histidine 327, and serine 379 each coordinate substrate.

It belongs to the RuBisCO large chain family. Type I subfamily. As to quaternary structure, heterohexadecamer of 8 large chains and 8 small chains; disulfide-linked. The disulfide link is formed within the large subunit homodimers. Mg(2+) serves as cofactor. In terms of processing, the disulfide bond which can form in the large chain dimeric partners within the hexadecamer appears to be associated with oxidative stress and protein turnover.

The protein localises to the plastid. The protein resides in the chloroplast. It carries out the reaction 2 (2R)-3-phosphoglycerate + 2 H(+) = D-ribulose 1,5-bisphosphate + CO2 + H2O. The enzyme catalyses D-ribulose 1,5-bisphosphate + O2 = 2-phosphoglycolate + (2R)-3-phosphoglycerate + 2 H(+). In terms of biological role, ruBisCO catalyzes two reactions: the carboxylation of D-ribulose 1,5-bisphosphate, the primary event in carbon dioxide fixation, as well as the oxidative fragmentation of the pentose substrate in the photorespiration process. Both reactions occur simultaneously and in competition at the same active site. The chain is Ribulose bisphosphate carboxylase large chain from Adiantum capillus-veneris (Maidenhair fern).